The sequence spans 203 residues: GTP-binding protein rho4 (203 aa).

Gly21–Thr28 is a binding site for GTP. The Effector region signature appears at Tyr43–Tyr51. A GTP-binding site is contributed by Asp70 to Gln74. The residue at position 200 (Cys200) is a Cysteine methyl ester. A lipid anchor (S-geranylgeranyl cysteine) is attached at Cys200. The propeptide at Val201–Leu203 is removed in mature form.

Belongs to the small GTPase superfamily. Rho family.

The protein resides in the membrane. Functionally, required for cell separation. Involved in the regulation of the septum degradation during cytokinesis and in the organization of F-actin patches and cytoplasmic microtubules. This chain is GTP-binding protein rho4 (rho4), found in Schizosaccharomyces pombe (strain 972 / ATCC 24843) (Fission yeast).